The sequence spans 208 residues: Uracil phosphoribosyltransferase (208 aa).

5-phospho-alpha-D-ribose 1-diphosphate contacts are provided by residues Arg78, Arg103, and 130–138 (DPMLATGGS). Uracil contacts are provided by residues Ile193 and 198–200 (GDA). Asp199 is a 5-phospho-alpha-D-ribose 1-diphosphate binding site.

This sequence belongs to the UPRTase family. The cofactor is Mg(2+).

The enzyme catalyses UMP + diphosphate = 5-phospho-alpha-D-ribose 1-diphosphate + uracil. It functions in the pathway pyrimidine metabolism; UMP biosynthesis via salvage pathway; UMP from uracil: step 1/1. Allosterically activated by GTP. In terms of biological role, catalyzes the conversion of uracil and 5-phospho-alpha-D-ribose 1-diphosphate (PRPP) to UMP and diphosphate. This chain is Uracil phosphoribosyltransferase, found in Yersinia pestis.